We begin with the raw amino-acid sequence, 229 residues long: UPF0173 metal-dependent hydrolase SSP1060 (229 aa).

This sequence belongs to the UPF0173 family.

This is UPF0173 metal-dependent hydrolase SSP1060 from Staphylococcus saprophyticus subsp. saprophyticus (strain ATCC 15305 / DSM 20229 / NCIMB 8711 / NCTC 7292 / S-41).